Here is a 204-residue protein sequence, read N- to C-terminus: Probable nicotinate-nucleotide adenylyltransferase (204 aa).

It belongs to the NadD family.

The catalysed reaction is nicotinate beta-D-ribonucleotide + ATP + H(+) = deamido-NAD(+) + diphosphate. The protein operates within cofactor biosynthesis; NAD(+) biosynthesis; deamido-NAD(+) from nicotinate D-ribonucleotide: step 1/1. In terms of biological role, catalyzes the reversible adenylation of nicotinate mononucleotide (NaMN) to nicotinic acid adenine dinucleotide (NaAD). This Mycolicibacterium gilvum (strain PYR-GCK) (Mycobacterium gilvum (strain PYR-GCK)) protein is Probable nicotinate-nucleotide adenylyltransferase.